Reading from the N-terminus, the 439-residue chain is Xylose isomerase (439 aa).

Residues H101 and D104 contribute to the active site. 7 residues coordinate Mg(2+): E232, E268, H271, D296, D307, D309, and D339.

It belongs to the xylose isomerase family. In terms of assembly, homotetramer. Mg(2+) serves as cofactor.

It localises to the cytoplasm. It carries out the reaction alpha-D-xylose = alpha-D-xylulofuranose. This Pectobacterium atrosepticum (strain SCRI 1043 / ATCC BAA-672) (Erwinia carotovora subsp. atroseptica) protein is Xylose isomerase.